Reading from the N-terminus, the 184-residue chain is Ribosome-recycling factor (184 aa).

The protein belongs to the RRF family.

The protein resides in the cytoplasm. Functionally, responsible for the release of ribosomes from messenger RNA at the termination of protein biosynthesis. May increase the efficiency of translation by recycling ribosomes from one round of translation to another. The chain is Ribosome-recycling factor from Psychrobacter sp. (strain PRwf-1).